The following is a 699-amino-acid chain: MEIPPQEAPPGPGADGEAEEAPVEAPSPGPASPPADGRLKAAAKRVTFPSDEDIVSGAVEPKDPWRHAQNVTVDEIIGAYKQACQKLNCRQIPKLLRQLQEFTDLGHRIDCLDLKGEKLDYKTCEALEEVFKRLQFKVVDLEQTNLDEDGASALFDMIEYYESATHLNISFNKHIGTRGWQAAAHMMRKTSCLQYLDARNTPLLDHSAPFVARALRIRSSLAVLHLESSSLSGRPLMLLATALKMNMTLRELYLADNKLNGLQDSAQLGNLLKFNCSLQILDLRNNHVLDSGLAYICEGLKEQRKGLATLVLWNNQLTHTGMAFLGMTLPHTHSLETLNLGHNPIGNEGVRNLKNGLISNRSVLRLGLASTKLTCEGAVAVAEFIAESPRLLRLDLRENEIKTGGLMALSLALKVNHSLLRLDLDREPKKEAVKSFIETQKALLAEIQNGCKRNFVLVREREEKEQRLQLSASMPEITVTEPQPDDEPREEPAAEAQENGAPGPSPGPDSDSDSDSEGEDRDEADGERAEAPCPTLVPPTDSLGPGDRSPPGCPSSPAEQRISVSSPGWGHKVFVVTRVESPPERAEPPVPPAPPGPVSPPASASPPTSPFPTPTEAASTPDPGPPEPQPPLEPPQVGPPLPNGLKPEFALALSPEPPPGPEAKVGSCGLEHELSCSKNEKELEELLLEASQESGQETL.

Positions 1–12 (MEIPPQEAPPGP) are enriched in pro residues. The tract at residues 1-42 (MEIPPQEAPPGPGADGEAEEAPVEAPSPGPASPPADGRLKAA) is disordered. Phosphoserine occurs at positions 50 and 56. LRR repeat units follow at residues 220–240 (SLAVLHLESSSLSGRPLMLLA), 248–269 (TLRELYLADNKLNGLQDSAQLG), 277–297 (SLQILDLRNNHVLDSGLAYIC), 306–326 (GLATLVLWNNQLTHTGMAFLG), and 334–354 (SLETLNLGHNPIGNEGVRNLK). A disordered region spans residues 467–667 (RLQLSASMPE…PPGPEAKVGS (201 aa)). A compositionally biased stretch (acidic residues) spans 510–525 (SDSDSDSEGEDRDEAD). Ser566 is subject to Phosphoserine. 2 stretches are compositionally biased toward pro residues: residues 588-613 (PPVPPAPPGPVSPPASASPPTSPFPT) and 622-642 (DPGPPEPQPPLEPPQVGPPLP).

The protein belongs to the PPP1R37 family. In terms of assembly, interacts with PPP1CA.

Its function is as follows. Inhibits phosphatase activity of protein phosphatase 1 (PP1) complexes. This Bos taurus (Bovine) protein is Protein phosphatase 1 regulatory subunit 37 (PPP1R37).